Consider the following 110-residue polypeptide: Large ribosomal subunit protein uL22 (110 aa).

This sequence belongs to the universal ribosomal protein uL22 family. In terms of assembly, part of the 50S ribosomal subunit.

This protein binds specifically to 23S rRNA; its binding is stimulated by other ribosomal proteins, e.g. L4, L17, and L20. It is important during the early stages of 50S assembly. It makes multiple contacts with different domains of the 23S rRNA in the assembled 50S subunit and ribosome. Its function is as follows. The globular domain of the protein is located near the polypeptide exit tunnel on the outside of the subunit, while an extended beta-hairpin is found that lines the wall of the exit tunnel in the center of the 70S ribosome. The polypeptide is Large ribosomal subunit protein uL22 (Syntrophus aciditrophicus (strain SB)).